We begin with the raw amino-acid sequence, 531 residues long: Peptide chain release factor 3 (531 aa).

In terms of domain architecture, tr-type G spans 10–278; sequence RRRRTFAIIS…SLIDWAPAPK (269 aa). Residues 19-26, 87-91, and 141-144 contribute to the GTP site; these read SHPDAGKT, DTPGH, and NKYD.

Belongs to the TRAFAC class translation factor GTPase superfamily. Classic translation factor GTPase family. PrfC subfamily.

It is found in the cytoplasm. In terms of biological role, increases the formation of ribosomal termination complexes and stimulates activities of RF-1 and RF-2. It binds guanine nucleotides and has strong preference for UGA stop codons. It may interact directly with the ribosome. The stimulation of RF-1 and RF-2 is significantly reduced by GTP and GDP, but not by GMP. This is Peptide chain release factor 3 from Neisseria meningitidis serogroup C / serotype 2a (strain ATCC 700532 / DSM 15464 / FAM18).